Reading from the N-terminus, the 420-residue chain is MEIDTLLGAFRDFEKKGEKESCPILDQFLSHVAKTGETMIQWSQFKSYFLFKLEKVMDDFKASCPEQRGPANPNVEYIPFEEMKQRILKIVNGYNGIPFTIQRLCELLTEPKRNYAGTDKFLRGVEKNVMVVSCVYPTSEKKGSSCVNRMNGVMFPGNTSAFPDRNVNGPGTPRPLNRPKHSLSSNVATNGLPDSTESKEQASEQSERTVNESSASEAESHSGAVKSKHRDDEDATHAETHEAKRLKFDKEEEEEEDDEEEDEDGDEIKKELDEPHSPCTSVAESSSDVPQSSTDVTAEVKDEDQEPSSTQSEVVENGVDRSTSEDSPDPSHKATGSESDPKEQQAEEEEEEESAEAQETEETNDPVSSSSNNSSDEGVSSAETPSASPSSSTELPAEGSVTAEITSDNSETADDNMEQD.

The segment at 157 to 420 (GNTSAFPDRN…ETADDNMEQD (264 aa)) is disordered. Positions 182–195 (SLSSNVATNGLPDS) are enriched in polar residues. Residues 196–210 (TESKEQASEQSERTV) show a composition bias toward basic and acidic residues. Low complexity predominate over residues 212–224 (ESSASEAESHSGA). Residues 229–250 (HRDDEDATHAETHEAKRLKFDK) show a composition bias toward basic and acidic residues. The segment covering 251 to 266 (EEEEEEDDEEEDEDGD) has biased composition (acidic residues). The segment covering 267-276 (EIKKELDEPH) has biased composition (basic and acidic residues). Residues 278–296 (PCTSVAESSSDVPQSSTDV) are compositionally biased toward polar residues. A compositionally biased stretch (basic and acidic residues) spans 318-332 (GVDRSTSEDSPDPSH). The segment covering 346 to 364 (AEEEEEEESAEAQETEETN) has biased composition (acidic residues). The span at 368–394 (SSSSNNSSDEGVSSAETPSASPSSSTE) shows a compositional bias: low complexity. Residues 411 to 420 (ETADDNMEQD) are compositionally biased toward acidic residues.

It belongs to the PPP4R2 family. As to quaternary structure, serine/threonine-protein phosphatase 4 (PP4) occurs in different assemblies of the catalytic and one or more regulatory subunits.

In terms of biological role, regulatory subunit of serine/threonine-protein phosphatase 4 (PP4C). The chain is Serine/threonine-protein phosphatase 4 regulatory subunit 2-A (ppp4r2a) from Danio rerio (Zebrafish).